The primary structure comprises 305 residues: Axin interactor, dorsalization-associated protein A (305 aa).

Residues 153-220 (GTLLPRLPSE…RKEDTYVHFN (68 aa)) form an axin-binding region. Residues 156 to 303 (LPRLPSEPGM…LYLHLLQTLL (148 aa)) form the C2 Aida-type domain.

The protein belongs to the AIDA family.

Its function is as follows. Acts as a ventralizing factor during embryogenesis. Inhibits axin-mediated JNK activation by binding axin and disrupting axin homodimerization. This in turn antagonizes a Wnt/beta-catenin-independent dorsalization pathway activated by axin/JNK-signaling. This Xenopus laevis (African clawed frog) protein is Axin interactor, dorsalization-associated protein A (aida-a).